Consider the following 142-residue polypeptide: Large ribosomal subunit protein uL11 (142 aa).

Belongs to the universal ribosomal protein uL11 family. Part of the ribosomal stalk of the 50S ribosomal subunit. Interacts with L10 and the large rRNA to form the base of the stalk. L10 forms an elongated spine to which L12 dimers bind in a sequential fashion forming a multimeric L10(L12)X complex. Post-translationally, one or more lysine residues are methylated.

Forms part of the ribosomal stalk which helps the ribosome interact with GTP-bound translation factors. The chain is Large ribosomal subunit protein uL11 from Photobacterium profundum (strain SS9).